Reading from the N-terminus, the 143-residue chain is UPF0201 protein Tneu_0685 (143 aa).

The protein belongs to the UPF0201 family.

The sequence is that of UPF0201 protein Tneu_0685 from Pyrobaculum neutrophilum (strain DSM 2338 / JCM 9278 / NBRC 100436 / V24Sta) (Thermoproteus neutrophilus).